The following is a 902-amino-acid chain: Protein translocase subunit SecA (902 aa).

ATP is bound by residues Q87, 105-109 (GEGKT), and D512. Disordered stretches follow at residues 565–584 (RRIDNQLRGRSGRQGDPGSS) and 840–902 (VEEQ…GKLK). Composition is skewed to basic and acidic residues over residues 840 to 859 (VEEQRRQADDVPKNFEHEDA) and 873 to 882 (QVREGAKVGR). Residues C886, C888, C897, and H898 each contribute to the Zn(2+) site. Positions 892–902 (KKYKQCHGKLK) are enriched in basic residues.

The protein belongs to the SecA family. In terms of assembly, monomer and homodimer. Part of the essential Sec protein translocation apparatus which comprises SecA, SecYEG and auxiliary proteins SecDF-YajC and YidC. The cofactor is Zn(2+).

Its subcellular location is the cell inner membrane. The protein localises to the cytoplasm. It carries out the reaction ATP + H2O + cellular proteinSide 1 = ADP + phosphate + cellular proteinSide 2.. In terms of biological role, part of the Sec protein translocase complex. Interacts with the SecYEG preprotein conducting channel. Has a central role in coupling the hydrolysis of ATP to the transfer of proteins into and across the cell membrane, serving both as a receptor for the preprotein-SecB complex and as an ATP-driven molecular motor driving the stepwise translocation of polypeptide chains across the membrane. The chain is Protein translocase subunit SecA from Alteromonas mediterranea (strain DSM 17117 / CIP 110805 / LMG 28347 / Deep ecotype).